A 108-amino-acid chain; its full sequence is UPF0235 protein Rpal_0418 (108 aa).

The protein belongs to the UPF0235 family.

The polypeptide is UPF0235 protein Rpal_0418 (Rhodopseudomonas palustris (strain TIE-1)).